Here is a 200-residue protein sequence, read N- to C-terminus: ATP synthase subunit s, mitochondrial (200 aa).

The transit peptide at 1–25 (MMLFGKVSQQLCGIKKLPWSCDSRY) directs the protein to the mitochondrion. The N-terminal domain stretch occupies residues 1-61 (MMLFGKVSQQ…SEWLLRCGAM (61 aa)). Gly-59 is a binding site for Mg(2+). 4 LRR repeats span residues 62–87 (VRYH…KYKI), 88–116 (QAID…KIRL), 117–141 (CKCH…KSIL), and 142–173 (EMEI…LSDL). Thr-93 contacts Mg(2+).

This sequence belongs to the ATP synthase subunit s family. As to quaternary structure, homotetramer. Associates with ATP synthase.

The protein localises to the mitochondrion. The protein resides in the mitochondrion inner membrane. Involved in regulation of mitochondrial membrane ATP synthase. Necessary for H(+) conduction of ATP synthase. Facilitates energy-driven catalysis of ATP synthesis by blocking a proton leak through an alternative proton exit pathway. This is ATP synthase subunit s, mitochondrial (DMAC2L) from Macaca fascicularis (Crab-eating macaque).